Reading from the N-terminus, the 225-residue chain is uncharacterized protein (225 aa).

A divalent metal cation is bound by residues E69, E71, and D100.

Belongs to the FAH family.

This is an uncharacterized protein from Pyrococcus abyssi (strain GE5 / Orsay).